The sequence spans 134 residues: Profilin-2 (134 aa).

Cys-13 and Cys-118 are oxidised to a cystine. Positions 84 to 100 match the Involved in PIP2 interaction motif; that stretch reads AVIRGKKGSGGITIKET. At Thr-114 the chain carries Phosphothreonine.

The protein belongs to the profilin family. In terms of assembly, occurs in many kinds of cells as a complex with monomeric actin in a 1:1 ratio. Post-translationally, phosphorylated by MAP kinases.

It localises to the cytoplasm. The protein localises to the cytoskeleton. Its function is as follows. Binds to actin and affects the structure of the cytoskeleton. At high concentrations, profilin prevents the polymerization of actin, whereas it enhances it at low concentrations. The polypeptide is Profilin-2 (Olea europaea (Common olive)).